A 367-amino-acid polypeptide reads, in one-letter code: Glutamate 5-kinase (367 aa).

Lys-10 contacts ATP. Residues Ser-50, Asp-137, and Asn-149 each contribute to the substrate site. ATP is bound by residues 169 to 170 and 211 to 217; these read TD and TGGMSTK. Residues 275–353 enclose the PUA domain; sequence AGIITIDAGA…QDIEQVLGYE (79 aa).

Belongs to the glutamate 5-kinase family.

The protein localises to the cytoplasm. It catalyses the reaction L-glutamate + ATP = L-glutamyl 5-phosphate + ADP. It participates in amino-acid biosynthesis; L-proline biosynthesis; L-glutamate 5-semialdehyde from L-glutamate: step 1/2. Functionally, catalyzes the transfer of a phosphate group to glutamate to form L-glutamate 5-phosphate. This chain is Glutamate 5-kinase, found in Pasteurella multocida (strain Pm70).